The following is a 417-amino-acid chain: NADH-quinone oxidoreductase subunit D (417 aa).

It belongs to the complex I 49 kDa subunit family. NDH-1 is composed of 14 different subunits. Subunits NuoB, C, D, E, F, and G constitute the peripheral sector of the complex.

Its subcellular location is the cell inner membrane. It carries out the reaction a quinone + NADH + 5 H(+)(in) = a quinol + NAD(+) + 4 H(+)(out). Its function is as follows. NDH-1 shuttles electrons from NADH, via FMN and iron-sulfur (Fe-S) centers, to quinones in the respiratory chain. The immediate electron acceptor for the enzyme in this species is believed to be ubiquinone. Couples the redox reaction to proton translocation (for every two electrons transferred, four hydrogen ions are translocated across the cytoplasmic membrane), and thus conserves the redox energy in a proton gradient. In Herminiimonas arsenicoxydans, this protein is NADH-quinone oxidoreductase subunit D.